Here is a 396-residue protein sequence, read N- to C-terminus: MALKKRSKHSKKFKLNLGPQHPATHGVLRLILEMDGEIVERADPHIGLLHRGTEKLIEYKTYLQAIPYFDRLDYVSPMCQEHAFALAIEHLLKCEVPLRAQYIRVMFSELTRILNHTLNIATQALDVGATTPLLWMFEEREKIMEFYERVSGSRLHANYFRPGGVSQDLPEGLIENIADFCEQFPCKIADLETLLTDNRIWKQRTVDIGIVSKQQAMDWGFSGVMLRGSGIAWDLRKSQPYDQYANLDFDVAIGKNGDCYDRYLIRIEEMYQSIKIIKQCIQKMPAGEIRTQDPSISPPKRSEIKKSMEALINHFKLYSEGYNVPAGEVYAAVEAPKGEFGVYLYSDGTNRPYRCRIKAPGFAHLQGLDFMARGHSLSDIITIIATLDIVFGEIDR.

This sequence belongs to the complex I 49 kDa subunit family. As to quaternary structure, NDH-1 is composed of 14 different subunits. Subunits NuoB, C, D, E, F, and G constitute the peripheral sector of the complex.

It is found in the cell inner membrane. The enzyme catalyses a quinone + NADH + 5 H(+)(in) = a quinol + NAD(+) + 4 H(+)(out). Functionally, NDH-1 shuttles electrons from NADH, via FMN and iron-sulfur (Fe-S) centers, to quinones in the respiratory chain. The immediate electron acceptor for the enzyme in this species is believed to be ubiquinone. Couples the redox reaction to proton translocation (for every two electrons transferred, four hydrogen ions are translocated across the cytoplasmic membrane), and thus conserves the redox energy in a proton gradient. The protein is NADH-quinone oxidoreductase subunit D of Orientia tsutsugamushi (strain Ikeda) (Rickettsia tsutsugamushi).